Consider the following 231-residue polypeptide: Histidine biosynthesis bifunctional protein HisIE (231 aa).

Positions 1–130 (MQDVFRQIDW…QKYPIGVYHI (130 aa)) are phosphoribosyl-AMP cyclohydrolase. Residues 131 to 231 (LDDLYHIIEQ…GIEEKASRKH (101 aa)) form a phosphoribosyl-ATP pyrophosphohydrolase region.

It in the N-terminal section; belongs to the PRA-CH family. This sequence in the C-terminal section; belongs to the PRA-PH family.

Its subcellular location is the cytoplasm. It carries out the reaction 1-(5-phospho-beta-D-ribosyl)-ATP + H2O = 1-(5-phospho-beta-D-ribosyl)-5'-AMP + diphosphate + H(+). It catalyses the reaction 1-(5-phospho-beta-D-ribosyl)-5'-AMP + H2O = 1-(5-phospho-beta-D-ribosyl)-5-[(5-phospho-beta-D-ribosylamino)methylideneamino]imidazole-4-carboxamide. It participates in amino-acid biosynthesis; L-histidine biosynthesis; L-histidine from 5-phospho-alpha-D-ribose 1-diphosphate: step 2/9. Its pathway is amino-acid biosynthesis; L-histidine biosynthesis; L-histidine from 5-phospho-alpha-D-ribose 1-diphosphate: step 3/9. The chain is Histidine biosynthesis bifunctional protein HisIE from Helicobacter hepaticus (strain ATCC 51449 / 3B1).